A 622-amino-acid chain; its full sequence is Phosphomethylpyrimidine synthase (622 aa).

Residues Asn226, Met255, Tyr284, His320, 340–342, 381–384, and Glu420 contribute to the substrate site; these read SRG and DGLR. His424 serves as a coordination point for Zn(2+). Residue Tyr447 coordinates substrate. His488 is a binding site for Zn(2+). Cys568, Cys571, and Cys576 together coordinate [4Fe-4S] cluster.

The protein belongs to the ThiC family. As to quaternary structure, homodimer. [4Fe-4S] cluster is required as a cofactor.

The catalysed reaction is 5-amino-1-(5-phospho-beta-D-ribosyl)imidazole + S-adenosyl-L-methionine = 4-amino-2-methyl-5-(phosphooxymethyl)pyrimidine + CO + 5'-deoxyadenosine + formate + L-methionine + 3 H(+). The protein operates within cofactor biosynthesis; thiamine diphosphate biosynthesis. Its function is as follows. Catalyzes the synthesis of the hydroxymethylpyrimidine phosphate (HMP-P) moiety of thiamine from aminoimidazole ribotide (AIR) in a radical S-adenosyl-L-methionine (SAM)-dependent reaction. The chain is Phosphomethylpyrimidine synthase from Ruthia magnifica subsp. Calyptogena magnifica.